Here is a 216-residue protein sequence, read N- to C-terminus: Pyridoxine/pyridoxamine 5'-phosphate oxidase (216 aa).

Substrate-binding positions include 12–15 and K70; that span reads RREY. FMN is bound by residues 65–70, 80–81, R86, K87, and Q109; these read RLVLLK and YT. Residues Y127, R131, and S135 each coordinate substrate. FMN is bound by residues 144–145 and W189; that span reads QS. Position 195–197 (195–197) interacts with substrate; the sequence is RLH. R199 contacts FMN.

Belongs to the pyridoxamine 5'-phosphate oxidase family. In terms of assembly, homodimer. Requires FMN as cofactor.

The catalysed reaction is pyridoxamine 5'-phosphate + O2 + H2O = pyridoxal 5'-phosphate + H2O2 + NH4(+). It carries out the reaction pyridoxine 5'-phosphate + O2 = pyridoxal 5'-phosphate + H2O2. Its pathway is cofactor metabolism; pyridoxal 5'-phosphate salvage; pyridoxal 5'-phosphate from pyridoxamine 5'-phosphate: step 1/1. It participates in cofactor metabolism; pyridoxal 5'-phosphate salvage; pyridoxal 5'-phosphate from pyridoxine 5'-phosphate: step 1/1. In terms of biological role, catalyzes the oxidation of either pyridoxine 5'-phosphate (PNP) or pyridoxamine 5'-phosphate (PMP) into pyridoxal 5'-phosphate (PLP). In Baumannia cicadellinicola subsp. Homalodisca coagulata, this protein is Pyridoxine/pyridoxamine 5'-phosphate oxidase.